Reading from the N-terminus, the 121-residue chain is Putative iron-sulfur cluster insertion protein ErpA (121 aa).

Iron-sulfur cluster-binding residues include C49, C113, and C115.

The protein belongs to the HesB/IscA family. Homodimer. It depends on iron-sulfur cluster as a cofactor.

Functionally, required for insertion of 4Fe-4S clusters. This is Putative iron-sulfur cluster insertion protein ErpA from Paracidovorax citrulli (strain AAC00-1) (Acidovorax citrulli).